We begin with the raw amino-acid sequence, 393 residues long: Protein TsgA (393 aa).

Transmembrane regions (helical) follow at residues Trp11 to Met31, Phe51 to Pro71, Phe78 to Leu98, Ala101 to Ile121, Leu134 to Phe154, Trp162 to Gly182, Ile206 to Ile226, Ala245 to Leu265, Ile273 to Gln293, Trp298 to Gly318, Phe332 to Val352, and Leu361 to Val381.

This sequence belongs to the major facilitator superfamily. TsgA family.

It localises to the cell inner membrane. The polypeptide is Protein TsgA (Salmonella gallinarum (strain 287/91 / NCTC 13346)).